Consider the following 206-residue polypeptide: Outer-membrane lipoprotein carrier protein (206 aa).

The signal sequence occupies residues 1–21 (MKKLLCAVLLSPLLYSNAVLA).

This sequence belongs to the LolA family. Monomer.

It localises to the periplasm. Functionally, participates in the translocation of lipoproteins from the inner membrane to the outer membrane. Only forms a complex with a lipoprotein if the residue after the N-terminal Cys is not an aspartate (The Asp acts as a targeting signal to indicate that the lipoprotein should stay in the inner membrane). This chain is Outer-membrane lipoprotein carrier protein, found in Shewanella sp. (strain MR-7).